A 316-amino-acid polypeptide reads, in one-letter code: Cytochrome c biogenesis protein CcsA (316 aa).

8 helical membrane-spanning segments follow: residues 9–29 (IFVN…LINL), 39–61 (FSKN…RYLQ), 70–90 (LYES…ILEV), 94–114 (IGLS…FATL), 143–163 (LISY…LSLF), 224–244 (TISL…VWAN), 257–271 (ETWA…AIYL), and 289–309 (SMGF…GVGL).

It belongs to the CcmF/CycK/Ccl1/NrfE/CcsA family. May interact with Ccs1.

Its subcellular location is the plastid. It localises to the chloroplast thylakoid membrane. Functionally, required during biogenesis of c-type cytochromes (cytochrome c6 and cytochrome f) at the step of heme attachment. In Adiantum capillus-veneris (Maidenhair fern), this protein is Cytochrome c biogenesis protein CcsA.